Reading from the N-terminus, the 67-residue chain is MKAEEIRGLADDELVARVLELEEERFRLRFRSGTEALEEPLRLRSIRRDIARLKTVQRERQLAARGR.

It belongs to the universal ribosomal protein uL29 family.

The protein is Large ribosomal subunit protein uL29 of Gemmatimonas aurantiaca (strain DSM 14586 / JCM 11422 / NBRC 100505 / T-27).